The primary structure comprises 627 residues: ATP-dependent zinc metalloprotease FtsH 2 (627 aa).

Topologically, residues 1-7 (MKFSWRT) are cytoplasmic. Residues 8-28 (ALLWSLPLLVVGFFFWQGSFG) form a helical membrane-spanning segment. The Lumenal segment spans residues 29–117 (GADANLGSNT…SHPVRNNGMV (89 aa)). The helical transmembrane segment at 118–138 (WGFVGNLIFPVLLIASLFFLF) threads the bilayer. The Cytoplasmic segment spans residues 139-627 (RRSSNMPGGP…PVKEQLIPQL (489 aa)). ATP is bound at residue 212 to 219 (GPPGTGKT). A Zn(2+)-binding site is contributed by histidine 433. Glutamate 434 is a catalytic residue. Zn(2+)-binding residues include histidine 437 and aspartate 511.

This sequence in the central section; belongs to the AAA ATPase family. In the C-terminal section; belongs to the peptidase M41 family. Homohexamer (Potential). Part of a large (&gt;500 kDa) complex that includes FtsH3 and PSII. Coimmunoprecipitates with YidC. Zn(2+) serves as cofactor.

The protein resides in the cellular thylakoid membrane. In terms of biological role, acts as a processive, ATP-dependent zinc metallopeptidase for both cytoplasmic and membrane proteins. Plays a role in the quality control of integral membrane proteins. Functionally, plays a role in the selective replacement of photosystem II (PSII) protein D1 in the PSII repair cycle following visible-light and UV-B induced damage. If damaged D1 is not removed then new D1 cannot be inserted to restore the PSII reaction center. Seems to also degrade damaged and/or unassembled PSII proteins D2 and PsbB (CP47). May recognize D1 via its first 20 amino acids, as deletion of these prevents the PSII repair cycle. Also seems to degrade cytoplasmic GGPS, glucosylglycerol-phosphate synthase. The sequence is that of ATP-dependent zinc metalloprotease FtsH 2 (ftsH2) from Synechocystis sp. (strain ATCC 27184 / PCC 6803 / Kazusa).